We begin with the raw amino-acid sequence, 225 residues long: NAD(P)H-quinone oxidoreductase subunit K, chloroplastic (225 aa).

Residues Cys-43, Cys-44, Cys-108, and Cys-139 each contribute to the [4Fe-4S] cluster site.

The protein belongs to the complex I 20 kDa subunit family. In terms of assembly, NDH is composed of at least 16 different subunits, 5 of which are encoded in the nucleus. The cofactor is [4Fe-4S] cluster.

The protein localises to the plastid. It localises to the chloroplast thylakoid membrane. It catalyses the reaction a plastoquinone + NADH + (n+1) H(+)(in) = a plastoquinol + NAD(+) + n H(+)(out). It carries out the reaction a plastoquinone + NADPH + (n+1) H(+)(in) = a plastoquinol + NADP(+) + n H(+)(out). In terms of biological role, NDH shuttles electrons from NAD(P)H:plastoquinone, via FMN and iron-sulfur (Fe-S) centers, to quinones in the photosynthetic chain and possibly in a chloroplast respiratory chain. The immediate electron acceptor for the enzyme in this species is believed to be plastoquinone. Couples the redox reaction to proton translocation, and thus conserves the redox energy in a proton gradient. The chain is NAD(P)H-quinone oxidoreductase subunit K, chloroplastic from Guizotia abyssinica (Niger).